The sequence spans 311 residues: HPr kinase/phosphorylase (311 aa).

Catalysis depends on residues His-138 and Lys-159. Residue 153-160 participates in ATP binding; it reads GKSGVGKS. Ser-160 lines the Mg(2+) pocket. Asp-177 acts as the Proton acceptor; for phosphorylation activity. Proton donor; for dephosphorylation activity in catalysis. Residues 201–210 are important for the catalytic mechanism of both phosphorylation and dephosphorylation; that stretch reads LEIRGLGIIN. Glu-202 contributes to the Mg(2+) binding site. Residue Arg-243 is part of the active site. The important for the catalytic mechanism of dephosphorylation stretch occupies residues 264-269; that stretch reads PVRPGR.

The protein belongs to the HPrK/P family. In terms of assembly, homohexamer. The cofactor is Mg(2+).

The catalysed reaction is [HPr protein]-L-serine + ATP = [HPr protein]-O-phospho-L-serine + ADP + H(+). It catalyses the reaction [HPr protein]-O-phospho-L-serine + phosphate + H(+) = [HPr protein]-L-serine + diphosphate. Functionally, catalyzes the ATP- as well as the pyrophosphate-dependent phosphorylation of a specific serine residue in HPr, a phosphocarrier protein of the phosphoenolpyruvate-dependent sugar phosphotransferase system (PTS). HprK/P also catalyzes the pyrophosphate-producing, inorganic phosphate-dependent dephosphorylation (phosphorolysis) of seryl-phosphorylated HPr (P-Ser-HPr). The two antagonistic activities of HprK/P are regulated by several intracellular metabolites, which change their concentration in response to the absence or presence of rapidly metabolisable carbon sources (glucose, fructose, etc.) in the growth medium. Also phosphorylates/dephosphorylates the HPr-like catabolite repression protein crh on a specific serine residue. Therefore, by controlling the phosphorylation state of HPr and crh, HPrK/P is a sensor enzyme that plays a major role in the regulation of carbon metabolism and sugar transport: it mediates carbon catabolite repression (CCR), and regulates PTS-catalyzed carbohydrate uptake and inducer exclusion. This is HPr kinase/phosphorylase from Geobacillus sp. (strain WCH70).